Consider the following 488-residue polypeptide: 3-octaprenyl-4-hydroxybenzoate carboxy-lyase (488 aa).

N172 provides a ligand contact to Mn(2+). Residues 175–177 (IYR), 189–191 (RWL), and 194–195 (RG) each bind prenylated FMN. E238 is a binding site for Mn(2+). D287 (proton donor) is an active-site residue.

The protein belongs to the UbiD family. As to quaternary structure, homohexamer. The cofactor is prenylated FMN. Mn(2+) serves as cofactor.

It localises to the cell membrane. It catalyses the reaction a 4-hydroxy-3-(all-trans-polyprenyl)benzoate + H(+) = a 2-(all-trans-polyprenyl)phenol + CO2. It participates in cofactor biosynthesis; ubiquinone biosynthesis. In terms of biological role, catalyzes the decarboxylation of 3-octaprenyl-4-hydroxy benzoate to 2-octaprenylphenol, an intermediate step in ubiquinone biosynthesis. This is 3-octaprenyl-4-hydroxybenzoate carboxy-lyase from Pseudomonas putida (strain W619).